We begin with the raw amino-acid sequence, 369 residues long: Phosphoribosyl pyrophosphate synthase-associated protein 2 (369 aa).

Methionine 1 is modified (N-acetylmethionine). Phosphoserine is present on residues serine 219, serine 227, and serine 233.

This sequence belongs to the ribose-phosphate pyrophosphokinase family. In terms of assembly, binds to PRPS1 and PRPS2. In terms of tissue distribution, ubiquitous.

Seems to play a negative regulatory role in 5-phosphoribose 1-diphosphate synthesis. This is Phosphoribosyl pyrophosphate synthase-associated protein 2 (Prpsap2) from Rattus norvegicus (Rat).